Consider the following 154-residue polypeptide: SsrA-binding protein (154 aa).

It belongs to the SmpB family.

The protein resides in the cytoplasm. In terms of biological role, required for rescue of stalled ribosomes mediated by trans-translation. Binds to transfer-messenger RNA (tmRNA), required for stable association of tmRNA with ribosomes. tmRNA and SmpB together mimic tRNA shape, replacing the anticodon stem-loop with SmpB. tmRNA is encoded by the ssrA gene; the 2 termini fold to resemble tRNA(Ala) and it encodes a 'tag peptide', a short internal open reading frame. During trans-translation Ala-aminoacylated tmRNA acts like a tRNA, entering the A-site of stalled ribosomes, displacing the stalled mRNA. The ribosome then switches to translate the ORF on the tmRNA; the nascent peptide is terminated with the 'tag peptide' encoded by the tmRNA and targeted for degradation. The ribosome is freed to recommence translation, which seems to be the essential function of trans-translation. This Synechococcus sp. (strain JA-3-3Ab) (Cyanobacteria bacterium Yellowstone A-Prime) protein is SsrA-binding protein.